The chain runs to 505 residues: Amidophosphoribosyltransferase (505 aa).

Cys-2 functions as the Nucleophile in the catalytic mechanism. Residues 2 to 235 enclose the Glutamine amidotransferase type-2 domain; the sequence is CGIVGIVSQS…AGEAVYVTFD (234 aa). 3 residues coordinate Mg(2+): Thr-306, Asp-368, and Asp-369. A disordered region spans residues 484–505; it reads RNDNAKKKREKQASNLEIYNEQ. Over residues 496–505 the composition is skewed to polar residues; it reads ASNLEIYNEQ.

It in the C-terminal section; belongs to the purine/pyrimidine phosphoribosyltransferase family. The cofactor is Mg(2+).

It carries out the reaction 5-phospho-beta-D-ribosylamine + L-glutamate + diphosphate = 5-phospho-alpha-D-ribose 1-diphosphate + L-glutamine + H2O. It functions in the pathway purine metabolism; IMP biosynthesis via de novo pathway; N(1)-(5-phospho-D-ribosyl)glycinamide from 5-phospho-alpha-D-ribose 1-diphosphate: step 1/2. In terms of biological role, catalyzes the formation of phosphoribosylamine from phosphoribosylpyrophosphate (PRPP) and glutamine. This chain is Amidophosphoribosyltransferase, found in Haemophilus influenzae (strain ATCC 51907 / DSM 11121 / KW20 / Rd).